Here is a 448-residue protein sequence, read N- to C-terminus: Homogentisate 1,2-dioxygenase (448 aa).

The active-site Proton acceptor is H303. Residues H346 and E352 each contribute to the Fe cation site. Y361 and H382 together coordinate homogentisate. Residue H382 participates in Fe cation binding.

Belongs to the homogentisate dioxygenase family. In terms of assembly, hexamer; dimer of trimers. Fe cation serves as cofactor.

It catalyses the reaction homogentisate + O2 = 4-maleylacetoacetate + H(+). It participates in amino-acid degradation; L-phenylalanine degradation; acetoacetate and fumarate from L-phenylalanine: step 4/6. Its function is as follows. Involved in the catabolism of homogentisate (2,5-dihydroxyphenylacetate or 2,5-OH-PhAc), a central intermediate in the degradation of phenylalanine and tyrosine. Catalyzes the oxidative ring cleavage of the aromatic ring of homogentisate to yield maleylacetoacetate. This is Homogentisate 1,2-dioxygenase from Rhodopseudomonas palustris (strain BisB18).